An 843-amino-acid chain; its full sequence is Eisosome protein 1 (843 aa).

The disordered stretch occupies residues M1–P54. S2 carries the N-acetylserine modification. S2 carries the phosphoserine modification. Positions K33–K46 are enriched in basic residues. A phosphoserine mark is found at S88 and S130. A disordered region spans residues K120–R176. Polar residues-rich tracts occupy residues R127–K137 and T163–R176. A phosphoserine mark is found at S182, S401, S584, and S710. The interval D717–K843 is disordered. T720 is subject to Phosphothreonine. Low complexity predominate over residues S752–A764. 2 positions are modified to phosphoserine: S763 and S775. The segment covering S781–E797 has biased composition (basic and acidic residues). Residues I798–L810 show a composition bias toward polar residues. A phosphoserine mark is found at S816, S828, S829, and S838.

Belongs to the EIS1 family.

The protein resides in the cytoplasmic granule. It is found in the cell membrane. Its function is as follows. Required for normal formation of eisosomes, large cytoplasmic protein assemblies that localize to specialized domains on plasma membrane and mark the site of endocytosis. The chain is Eisosome protein 1 (EIS1) from Saccharomyces cerevisiae (strain JAY291) (Baker's yeast).